Reading from the N-terminus, the 82-residue chain is MDSIISAASVIAAGLAIGLAAIGPGIGQGNAAGQAVEGIARQPEGENKIRGTLLLSLAFMEALTIYGLVVALALLFANPFNG.

The next 2 membrane-spanning stretches (helical) occupy residues 4-24 (IISA…AIGP) and 57-77 (LAFM…LLFA).

This sequence belongs to the ATPase C chain family. F-type ATPases have 2 components, F(1) - the catalytic core - and F(0) - the membrane proton channel. F(1) has five subunits: alpha(3), beta(3), gamma(1), delta(1), epsilon(1). F(0) has four main subunits: a(1), b(1), b'(1) and c(10-14). The alpha and beta chains form an alternating ring which encloses part of the gamma chain. F(1) is attached to F(0) by a central stalk formed by the gamma and epsilon chains, while a peripheral stalk is formed by the delta, b and b' chains.

It localises to the plastid. The protein resides in the chloroplast thylakoid membrane. F(1)F(0) ATP synthase produces ATP from ADP in the presence of a proton or sodium gradient. F-type ATPases consist of two structural domains, F(1) containing the extramembraneous catalytic core and F(0) containing the membrane proton channel, linked together by a central stalk and a peripheral stalk. During catalysis, ATP synthesis in the catalytic domain of F(1) is coupled via a rotary mechanism of the central stalk subunits to proton translocation. Functionally, key component of the F(0) channel; it plays a direct role in translocation across the membrane. A homomeric c-ring of between 10-14 subunits forms the central stalk rotor element with the F(1) delta and epsilon subunits. This is ATP synthase subunit c, chloroplastic from Trieres chinensis (Marine centric diatom).